Here is a 343-residue protein sequence, read N- to C-terminus: SUMO-activating enzyme subunit aos-1 (343 aa).

This sequence belongs to the ubiquitin-activating E1 family. In terms of assembly, heterodimer of aos-1 and uba-2.

The protein operates within protein modification; protein sumoylation. Its function is as follows. The dimeric enzyme acts as an E1 ligase for smo-1. It mediates ATP-dependent activation of smo-1 and formation of a thioester with a conserved cysteine residue on uba-2. The sequence is that of SUMO-activating enzyme subunit aos-1 (aos-1) from Caenorhabditis elegans.